Consider the following 380-residue polypeptide: Flap endonuclease 1 (380 aa).

An N-domain region spans residues 1–104 (MGIHGLTKLI…AELEKRGEKR (104 aa)). Mg(2+) is bound at residue D34. DNA-binding residues include R47 and R70. 5 residues coordinate Mg(2+): D86, E158, E160, D179, and D181. Residues 122 to 253 (NIDKFSKRLV…KRAIDLIKQH (132 aa)) are I-domain. E158 is a DNA binding site. DNA-binding residues include G231 and D233. D233 contributes to the Mg(2+) binding site. Residues 336–344 (TQGRLDSFF) are interaction with PCNA. Residues 351–380 (SSKRKEPELKGSAKKKQKTGATPGKFKKGK) are disordered.

It belongs to the XPG/RAD2 endonuclease family. FEN1 subfamily. In terms of assembly, interacts with PCNA. Three molecules of fen1 bind to one PCNA trimer with each molecule binding to one PCNA monomer. PCNA stimulates the nuclease activity without altering cleavage specificity. It depends on Mg(2+) as a cofactor. Phosphorylated. Phosphorylation upon DNA damage induces relocalization to the nuclear plasma.

The protein resides in the nucleus. Its subcellular location is the nucleolus. It is found in the nucleoplasm. The protein localises to the mitochondrion. Functionally, structure-specific nuclease with 5'-flap endonuclease and 5'-3' exonuclease activities involved in DNA replication and repair. During DNA replication, cleaves the 5'-overhanging flap structure that is generated by displacement synthesis when DNA polymerase encounters the 5'-end of a downstream Okazaki fragment. It enters the flap from the 5'-end and then tracks to cleave the flap base, leaving a nick for ligation. Also involved in the long patch base excision repair (LP-BER) pathway, by cleaving within the apurinic/apyrimidinic (AP) site-terminated flap. Acts as a genome stabilization factor that prevents flaps from equilibrating into structures that lead to duplications and deletions. Also possesses 5'-3' exonuclease activity on nicked or gapped double-stranded DNA, and exhibits RNase H activity. Also involved in replication and repair of rDNA and in repairing mitochondrial DNA. The chain is Flap endonuclease 1 (fen1) from Anoplopoma fimbria (Sablefish).